A 270-amino-acid polypeptide reads, in one-letter code: Putative phosphoenolpyruvate synthase regulatory protein (270 aa).

150-157 (GVSRCGKT) contributes to the ADP binding site.

Belongs to the pyruvate, phosphate/water dikinase regulatory protein family. PSRP subfamily.

The enzyme catalyses [pyruvate, water dikinase] + ADP = [pyruvate, water dikinase]-phosphate + AMP + H(+). It catalyses the reaction [pyruvate, water dikinase]-phosphate + phosphate + H(+) = [pyruvate, water dikinase] + diphosphate. Its function is as follows. Bifunctional serine/threonine kinase and phosphorylase involved in the regulation of the phosphoenolpyruvate synthase (PEPS) by catalyzing its phosphorylation/dephosphorylation. The polypeptide is Putative phosphoenolpyruvate synthase regulatory protein (Shewanella denitrificans (strain OS217 / ATCC BAA-1090 / DSM 15013)).